The primary structure comprises 561 residues: Tetracenomycin A2 monooxygenase-dioxygenase (561 aa).

The FAD site is built by Leu15, Glu35, Gln128, and Met152. Catalysis depends on Tyr231, which acts as the Proton acceptor. Asp322 is an FAD binding site.

It belongs to the PheA/TfdB FAD monooxygenase family. As to quaternary structure, monomer. May form oligomers up to homohexamers. It depends on FAD as a cofactor.

The enzyme catalyses tetracenomycin A2 + 2 NADPH + 2 O2 + 2 H(+) = tetracenomycin C + 2 NADP(+) + H2O. Its pathway is antibiotic biosynthesis; tetracenomycin C biosynthesis. Functionally, involved in the biosynthesis of tetracenomycin C (TCM C). Catalyzes the triple hydroxylation of tetracenomycin A2 (TCM A2) at positions C-4, C-4a and C-12a to give tetracenomycin C (TCM C). Can use either NADH or NADPH as electron donors, but prefers NADPH under physiological conditions. This is Tetracenomycin A2 monooxygenase-dioxygenase from Streptomyces glaucescens.